The primary structure comprises 708 residues: Fatty acid oxidation complex subunit alpha (708 aa).

The segment at Met1–Pro190 is enoyl-CoA hydratase. The segment at Asp310–Gln708 is 3-hydroxyacyl-CoA dehydrogenase.

This sequence in the N-terminal section; belongs to the enoyl-CoA hydratase/isomerase family. In the central section; belongs to the 3-hydroxyacyl-CoA dehydrogenase family. In terms of assembly, heterotetramer of two alpha chains (FadJ) and two beta chains (FadI).

It is found in the cytoplasm. The enzyme catalyses a (3S)-3-hydroxyacyl-CoA = a (2E)-enoyl-CoA + H2O. The catalysed reaction is a 4-saturated-(3S)-3-hydroxyacyl-CoA = a (3E)-enoyl-CoA + H2O. It carries out the reaction a (3S)-3-hydroxyacyl-CoA + NAD(+) = a 3-oxoacyl-CoA + NADH + H(+). It catalyses the reaction (3S)-3-hydroxybutanoyl-CoA = (3R)-3-hydroxybutanoyl-CoA. Its pathway is lipid metabolism; fatty acid beta-oxidation. Catalyzes the formation of a hydroxyacyl-CoA by addition of water on enoyl-CoA. Also exhibits 3-hydroxyacyl-CoA epimerase and 3-hydroxyacyl-CoA dehydrogenase activities. The sequence is that of Fatty acid oxidation complex subunit alpha from Idiomarina loihiensis (strain ATCC BAA-735 / DSM 15497 / L2-TR).